The following is a 1391-amino-acid chain: Eukaryotic translation initiation factor 3 subunit A (1391 aa).

The region spanning 315–498 (MQRMSTRVLL…RTLSFGSDLN (184 aa)) is the PCI domain. 6 stretches are compositionally biased toward basic and acidic residues: residues 809-921 (DKEE…RGGP), 940-959 (AALRKDEEQVSSRAFEEKVS), 966-1234 (EKGG…RDQT), 1246-1257 (GWREREKAREDS), 1265-1307 (QAPE…ETPR), and 1313-1380 (DSDR…IKPE). Residues 809–1391 (DKEEEEERLR…DEDGWTTVRR (583 aa)) are disordered. Repeat copies occupy residues 973–982 (DEDRGPKRGL) and 983–992 (EEDRGPRRGI). The 26 X 10 AA approximate tandem repeats of [DE]-[DE]-[DE]-R-[GATV]-[PS]-[KRW]-R-G-[AEFGIL] stretch occupies residues 973–1229 (DEDRGPKRGL…DDDRGPRRGE (257 aa)). A 3; approximate repeat occupies 993–1001 (DDAGPRRGF). Tandem repeats lie at residues 1002–1011 (EEDRGPRRGI), 1012–1021 (EDDRAPRRGF), 1022–1031 (DDDRGPRRGF), 1032–1041 (DDDRGPRRGF), 1042–1051 (DEDRGPRRGI), 1052–1061 (DDDRGPRRGF), 1062–1071 (DEDRTPRRGF), 1072–1081 (DDDRGPRRGF), 1082–1091 (DDDRGPRRGF), 1092–1101 (DEDRGPRRGF), 1102–1111 (EDDRGPRRGF), 1112–1120 (EDDRGPRRG), 1122–1131 (EDDRGPRRGF), 1132–1141 (EDDRGPRRGF), 1142–1151 (EDDRGPRRGF), 1152–1161 (DEDRGPRRGF), 1162–1171 (EDDRGPRRGF), 1172–1181 (DEDRTPRRGF), 1182–1191 (DDDRGPRRGL), and 1192–1201 (DEDRGSWRGG). A 24; approximate repeat occupies 1202–1209 (DDVPRRGA). 2 tandem repeats follow at residues 1210–1219 (DDDRGPRRGA) and 1220–1229 (DDDRGPRRGE).

Belongs to the eIF-3 subunit A family. Component of the eukaryotic translation initiation factor 3 (eIF-3) complex, which is composed of 13 subunits: eif3a, eif3b, eif3c, eif3d, eif3e, eif3f, eif3g, eif3h, eif3i, eif3j, eif3k, eif3l and eif3m.

The protein resides in the cytoplasm. Its function is as follows. RNA-binding component of the eukaryotic translation initiation factor 3 (eIF-3) complex, which is involved in protein synthesis of a specialized repertoire of mRNAs and, together with other initiation factors, stimulates binding of mRNA and methionyl-tRNAi to the 40S ribosome. The eIF-3 complex specifically targets and initiates translation of a subset of mRNAs involved in cell proliferation. The sequence is that of Eukaryotic translation initiation factor 3 subunit A (eif3a) from Xenopus tropicalis (Western clawed frog).